Reading from the N-terminus, the 354-residue chain is Dihydroorotate dehydrogenase (quinone) (354 aa).

Residues 67–71 (AGFDK) and Thr91 each bind FMN. Lys71 contacts substrate. Substrate is bound at residue 116 to 120 (NRMGF). FMN-binding residues include Asn144 and Asn177. Position 177 (Asn177) interacts with substrate. The active-site Nucleophile is the Ser180. Asn182 is a binding site for substrate. FMN contacts are provided by Lys213 and Thr241. Residue 242–243 (NT) participates in substrate binding. Residues Gly265, Gly294, and 315–316 (YT) contribute to the FMN site.

It belongs to the dihydroorotate dehydrogenase family. Type 2 subfamily. Monomer. FMN is required as a cofactor.

The protein localises to the cell membrane. It catalyses the reaction (S)-dihydroorotate + a quinone = orotate + a quinol. Its pathway is pyrimidine metabolism; UMP biosynthesis via de novo pathway; orotate from (S)-dihydroorotate (quinone route): step 1/1. In terms of biological role, catalyzes the conversion of dihydroorotate to orotate with quinone as electron acceptor. This chain is Dihydroorotate dehydrogenase (quinone), found in Mycolicibacterium smegmatis (strain ATCC 700084 / mc(2)155) (Mycobacterium smegmatis).